A 219-amino-acid chain; its full sequence is MFGFLKQVGDYTRDAVDAARNLTQGLSVTFDHMKRRPVTVQYPYEKLIPSERYRGRIHYEFDKCIACEVCVRVCPINLPVVDWVMNKETKKKELRNYSIDFGVCIFCGNCVEYCPTNCLSMTEEYELAAFDRHSLNYDNVALGRLPTSVTTDPSVQPLRELVYLPAGEVQPHGVSPDRPRAGKLPEQILEELKAAGSMKAAEDERESSSSASNMEESAG.

4Fe-4S ferredoxin-type domains are found at residues 55–84 and 95–124; these read GRIHYEFDKCIACEVCVRVCPINLPVVDWV and RNYSIDFGVCIFCGNCVEYCPTNCLSMTEE. [4Fe-4S] cluster is bound by residues Cys64, Cys67, Cys70, Cys74, Cys104, Cys107, Cys110, and Cys114. Residues 192 to 219 form a disordered region; that stretch reads LKAAGSMKAAEDERESSSSASNMEESAG. Low complexity predominate over residues 208-219; the sequence is SSSASNMEESAG.

This sequence belongs to the complex I 23 kDa subunit family. In terms of assembly, NDH-1 is composed of at least 11 different subunits. Requires [4Fe-4S] cluster as cofactor.

Its subcellular location is the cellular thylakoid membrane. The enzyme catalyses a plastoquinone + NADH + (n+1) H(+)(in) = a plastoquinol + NAD(+) + n H(+)(out). It carries out the reaction a plastoquinone + NADPH + (n+1) H(+)(in) = a plastoquinol + NADP(+) + n H(+)(out). In terms of biological role, NDH-1 shuttles electrons from an unknown electron donor, via FMN and iron-sulfur (Fe-S) centers, to quinones in the respiratory and/or the photosynthetic chain. The immediate electron acceptor for the enzyme in this species is believed to be plastoquinone. Couples the redox reaction to proton translocation, and thus conserves the redox energy in a proton gradient. This Synechococcus sp. (strain CC9311) protein is NAD(P)H-quinone oxidoreductase subunit I.